The primary structure comprises 89 residues: MSITAERKTALIKEYAKGNKDTGSPEVQIAILTERITNLTAHFKTHGKDNHSRRGLLKLVSQRRSLLDYLKRKEEARYRTLIERLGIRR.

Belongs to the universal ribosomal protein uS15 family. In terms of assembly, part of the 30S ribosomal subunit. Forms a bridge to the 50S subunit in the 70S ribosome, contacting the 23S rRNA.

In terms of biological role, one of the primary rRNA binding proteins, it binds directly to 16S rRNA where it helps nucleate assembly of the platform of the 30S subunit by binding and bridging several RNA helices of the 16S rRNA. Forms an intersubunit bridge (bridge B4) with the 23S rRNA of the 50S subunit in the ribosome. This is Small ribosomal subunit protein uS15 from Methylorubrum populi (strain ATCC BAA-705 / NCIMB 13946 / BJ001) (Methylobacterium populi).